We begin with the raw amino-acid sequence, 1380 residues long: DNA-directed RNA polymerase subunit beta (1380 aa).

This sequence belongs to the RNA polymerase beta chain family. As to quaternary structure, the RNAP catalytic core consists of 2 alpha, 1 beta, 1 beta' and 1 omega subunit. When a sigma factor is associated with the core the holoenzyme is formed, which can initiate transcription.

The enzyme catalyses RNA(n) + a ribonucleoside 5'-triphosphate = RNA(n+1) + diphosphate. In terms of biological role, DNA-dependent RNA polymerase catalyzes the transcription of DNA into RNA using the four ribonucleoside triphosphates as substrates. The sequence is that of DNA-directed RNA polymerase subunit beta from Alcanivorax borkumensis (strain ATCC 700651 / DSM 11573 / NCIMB 13689 / SK2).